The following is a 126-amino-acid chain: Aspartate 1-decarboxylase (126 aa).

S25 functions as the Schiff-base intermediate with substrate; via pyruvic acid in the catalytic mechanism. The residue at position 25 (S25) is a Pyruvic acid (Ser). T57 contributes to the substrate binding site. The Proton donor role is filled by Y58. Substrate is bound at residue 73–75; sequence GAA.

Belongs to the PanD family. As to quaternary structure, heterooctamer of four alpha and four beta subunits. It depends on pyruvate as a cofactor. In terms of processing, is synthesized initially as an inactive proenzyme, which is activated by self-cleavage at a specific serine bond to produce a beta-subunit with a hydroxyl group at its C-terminus and an alpha-subunit with a pyruvoyl group at its N-terminus.

The protein resides in the cytoplasm. The enzyme catalyses L-aspartate + H(+) = beta-alanine + CO2. The protein operates within cofactor biosynthesis; (R)-pantothenate biosynthesis; beta-alanine from L-aspartate: step 1/1. Catalyzes the pyruvoyl-dependent decarboxylation of aspartate to produce beta-alanine. The chain is Aspartate 1-decarboxylase from Psychrobacter sp. (strain PRwf-1).